We begin with the raw amino-acid sequence, 81 residues long: Photosystem I iron-sulfur center (81 aa).

4Fe-4S ferredoxin-type domains follow at residues 2–31 (AHSVKIYDTCIGCTQCVRACPTDVLEMIPW) and 39–68 (IASAPRTEDCVGCKRCESACPTDFLSVRVY). Residues Cys-11, Cys-14, Cys-17, Cys-21, Cys-48, Cys-51, Cys-54, and Cys-58 each contribute to the [4Fe-4S] cluster site.

The eukaryotic PSI reaction center is composed of at least 11 subunits. The cofactor is [4Fe-4S] cluster.

The protein resides in the plastid. It localises to the chloroplast thylakoid membrane. It catalyses the reaction reduced [plastocyanin] + hnu + oxidized [2Fe-2S]-[ferredoxin] = oxidized [plastocyanin] + reduced [2Fe-2S]-[ferredoxin]. Apoprotein for the two 4Fe-4S centers FA and FB of photosystem I (PSI); essential for photochemical activity. FB is the terminal electron acceptor of PSI, donating electrons to ferredoxin. The C-terminus interacts with PsaA/B/D and helps assemble the protein into the PSI complex. Required for binding of PsaD and PsaE to PSI. PSI is a plastocyanin-ferredoxin oxidoreductase, converting photonic excitation into a charge separation, which transfers an electron from the donor P700 chlorophyll pair to the spectroscopically characterized acceptors A0, A1, FX, FA and FB in turn. The sequence is that of Photosystem I iron-sulfur center from Adiantum capillus-veneris (Maidenhair fern).